We begin with the raw amino-acid sequence, 85 residues long: Small ribosomal subunit protein uS17 (85 aa).

Belongs to the universal ribosomal protein uS17 family. Part of the 30S ribosomal subunit.

Its function is as follows. One of the primary rRNA binding proteins, it binds specifically to the 5'-end of 16S ribosomal RNA. This chain is Small ribosomal subunit protein uS17, found in Anaeromyxobacter sp. (strain Fw109-5).